We begin with the raw amino-acid sequence, 313 residues long: Ribosomal RNA small subunit methyltransferase H (313 aa).

S-adenosyl-L-methionine is bound by residues 35 to 37 (GGH), Asp55, Phe79, Asp101, and Gln108.

It belongs to the methyltransferase superfamily. RsmH family.

It localises to the cytoplasm. It catalyses the reaction cytidine(1402) in 16S rRNA + S-adenosyl-L-methionine = N(4)-methylcytidine(1402) in 16S rRNA + S-adenosyl-L-homocysteine + H(+). In terms of biological role, specifically methylates the N4 position of cytidine in position 1402 (C1402) of 16S rRNA. The polypeptide is Ribosomal RNA small subunit methyltransferase H (Salmonella paratyphi A (strain ATCC 9150 / SARB42)).